The following is a 194-amino-acid chain: Type II secretion system protein H (194 aa).

A propeptide spans 1 to 6 (MTATRG) (leader sequence). Position 7 is an N-methylphenylalanine (F7). A helical membrane pass occupies residues 12–32 (ILLVLVLVSASAVAVIATFPV).

It belongs to the GSP H family. As to quaternary structure, type II secretion is composed of four main components: the outer membrane complex, the inner membrane complex, the cytoplasmic secretion ATPase and the periplasm-spanning pseudopilus. Interacts with core component EpsG. In terms of processing, cleaved by prepilin peptidase. Post-translationally, methylated by prepilin peptidase at the amino group of the N-terminal phenylalanine once the leader sequence is cleaved by prepilin peptidase.

The protein resides in the cell inner membrane. Component of the type II secretion system required for the energy-dependent secretion of extracellular factors such as proteases and toxins from the periplasm. Part of the pseudopilus tip complex that is critical for the recognition and binding of secretion substrates. This chain is Type II secretion system protein H (epsH), found in Vibrio cholerae serotype O1 (strain ATCC 39315 / El Tor Inaba N16961).